A 535-amino-acid polypeptide reads, in one-letter code: 3-hydroxyindolin-2-one monooxygenase (535 aa).

Helical transmembrane passes span 14–34 (VVQC…LLAI) and 469–489 (ICAG…NLIY). Residue C470 coordinates heme.

The protein belongs to the cytochrome P450 family. Heme is required as a cofactor.

Its subcellular location is the membrane. The catalysed reaction is 3-hydroxyindolin-2-one + reduced [NADPH--hemoprotein reductase] + O2 = 2-hydroxy-2H-1,4-benzoxazin-3(4H)-one + oxidized [NADPH--hemoprotein reductase] + H2O + H(+). Its pathway is secondary metabolite biosynthesis; 2,4-dihydroxy-1,4-benzoxazin-3-one biosynthesis; 2,4-dihydroxy-1,4-benzoxazin-3-one from indoleglycerol phosphate: step 4/5. Functionally, catalyzes the conversion of 3-hydroxyindolin-2-one to 2-hydroxy-1,4-benzoxazin-3-one (HBOA). In Zea mays (Maize), this protein is 3-hydroxyindolin-2-one monooxygenase (CYP71C1).